The following is a 1167-amino-acid chain: MKVNRETKRLYVGGLSQDISEADLQNQFSRFGEVSDVEIITRKDDQGNPQKVFAYINISVAEADLKKCMSVLNKTKWKGGTLQIQLAKESFLHRLAQEREAAKAKKEESTTGNANLLEKTGGVDFHMKAVPGTEVPGHKNWVVSKFGRVLPVLHLKNQHKRKIIKYDPSKYCHNLKKIGEDFSNTIPISSLTWELEGGNDPMSKKRRGEFSDFHGPPKKIIKVQKDESSTGSLAMSTRPRRVIERPPLTQQQAAQKRTCDSITPSKSSPVPVSDTQKLKNLPFKTSGLETAKKRNSISDDDTDSEDELRMMIAKEENLQRTTQPSINESESDPFEVVRDDFKSGVHKLHSLIGLGIKNRVSCHDSDDDIMRNDREYDSGDTDEIIAMKKNVAKVKNSTEFSQMEKSTKKTSFKNRENCELSDHCIKLQKRKSNVESALSHGLKSLNRKSPSHSSSSEDADSASELADSEGGEEYNAMMKNCLRVNLTLADLEQLAGSDLKVPNEDTKSDGPETTTQCKFDRGSKSPKTPTGLRRGRQCIRPAEIVASLLEGEENTCGKQKPKENNLKPKFQAFKGVGCLYEKESMKKSLKDSVASNNKDQNSMKHEDPSIISMEDGSPYVNGSLGEVTPCQHAKKANGPNYIQPQKRQTTFESQDRKAVSPSSSEKRSKNPISRPLEGKKSLSLSAKTHNIGFDKDSCHSTTKTEASQEERSDSSGLTSLKKSPKVSSKDTREIKTDFSLSISNSSDVSAKDKHAEDNEKRLAALEARQKAKEVQKKLVHNALANLDGHPEDKPTHIIFGSDSECETEETSTQEQSHPGEEWVKESMGKTSGKLFDSSDDDESDSEDDSNRFKIKPQFEGRAGQKLMDLQSHFGTDDRFRMDSRFLETDSEEEQEEVNEKKTAEEEELAEEKKKALNVVQSVLQINLSNSTNRGSVAAKKFKDIIHYDPTKQDHATYERKRDDKPKESKAKRKKKREEAEKLPEVSKEMYYNIAMDLKEIFQTTKYTSEKEEGTPWNEDCGKEKPEEIQDPAALTSDAEQPSGFTFSFFDSDTKDIKEETYRVETVKPGKIVWQEDPRLQDSSSEEEDVTEETDHRNSSPGEASLLEKETTRFFFFSKNDERLQGSDLFWRGVGSNMSRNSWEARTTNLRMDCRKKHKDAKRKMKPK.

Residues 8–89 form the RRM domain; the sequence is KRLYVGGLSQ…GTLQIQLAKE (82 aa). The disordered stretch occupies residues 223-304; the sequence is VQKDESSTGS…NSISDDDTDS (82 aa). Lys225 is covalently cross-linked (Glycyl lysine isopeptide (Lys-Gly) (interchain with G-Cter in SUMO2)). A compositionally biased stretch (polar residues) spans 248 to 275; sequence LTQQQAAQKRTCDSITPSKSSPVPVSDT. Ser268 and Ser298 each carry phosphoserine. Phosphothreonine is present on Thr302. Position 304 is a phosphoserine (Ser304). Lys314 participates in a covalent cross-link: Glycyl lysine isopeptide (Lys-Gly) (interchain with G-Cter in SUMO2). Ser331 and Ser365 each carry phosphoserine. Tyr376 carries the post-translational modification Phosphotyrosine. Position 378 is a phosphoserine (Ser378). At Thr381 the chain carries Phosphothreonine. Residue Ser432 is modified to Phosphoserine. 5 disordered regions span residues 435–470, 499–533, 590–908, 932–982, and 1006–1026; these read ESAL…DSEG, LKVP…TGLR, KDSV…EEEL, NRGS…AEKL, and YTSE…EKPE. Residues 457-470 are compositionally biased toward acidic residues; the sequence is EDADSASELADSEG. A compositionally biased stretch (basic and acidic residues) spans 501–510; sequence VPNEDTKSDG. The segment covering 640–652 has biased composition (polar residues); the sequence is NYIQPQKRQTTFE. Positions 653 to 668 are enriched in basic and acidic residues; that stretch reads SQDRKAVSPSSSEKRS. A Phosphoserine modification is found at Ser723. Basic and acidic residues predominate over residues 727–736; sequence SSKDTREIKT. The segment covering 738–748 has biased composition (polar residues); the sequence is FSLSISNSSDV. The span at 749–776 shows a compositional bias: basic and acidic residues; the sequence is SAKDKHAEDNEKRLAALEARQKAKEVQK. A coiled-coil region spans residues 753–779; it reads KHAEDNEKRLAALEARQKAKEVQKKLV. Phosphothreonine is present on Thr795. Ser801 bears the Phosphoserine mark. Residues 817–827 are compositionally biased toward basic and acidic residues; that stretch reads HPGEEWVKESM. Ser837, Ser838, Ser843, and Ser845 each carry phosphoserine. Residues 837-847 show a composition bias toward acidic residues; it reads SSDDDESDSED. The segment covering 874-887 has biased composition (basic and acidic residues); sequence GTDDRFRMDSRFLE. A coiled-coil region spans residues 886–924; the sequence is LETDSEEEQEEVNEKKTAEEEELAEEKKKALNVVQSVLQ. Thr888 is subject to Phosphothreonine. At Ser890 the chain carries Phosphoserine. 2 stretches are compositionally biased toward basic and acidic residues: residues 940–968 and 1007–1026; these read KFKD…PKES and TSEK…EKPE. At Ser1036 the chain carries Phosphoserine. Lys1057 is covalently cross-linked (Glycyl lysine isopeptide (Lys-Gly) (interchain with G-Cter in SUMO2)). Disordered stretches follow at residues 1071–1105 and 1145–1167; these read IVWQ…EASL and RTTN…MKPK. A phosphoserine mark is found at Ser1082, Ser1083, Ser1084, and Ser1099. Residues 1153–1167 show a composition bias toward basic residues; sequence CRKKHKDAKRKMKPK.

Interacts with the GTP form of RRAGA, RRAGC and RRAGD. Interacts with NIP7. Interacts with DDX18; the interaction is RNA-dependent. Interacts with DDX47; the interaction is RNA-dependent. Post-translationally, phosphorylated. Expressed in various diffuse-type gastric cancers. Detected at lower levels in skeletal muscle.

It localises to the nucleus. It is found in the nucleolus. Functionally, plays an essential role in the survival of diffuse-type gastric cancer cells. Acts as a nucleolar anchoring protein for DDX47. May be involved in regulation of gene expression at the post-transcriptional level or in ribosome biogenesis in cancer cells. The chain is Nucleolar protein 8 from Homo sapiens (Human).